The sequence spans 332 residues: 2-hydroxyacid dehydrogenase homolog 2 (332 aa).

Residues 154–155, 233–235, and aspartate 259 each bind NAD(+); these read KI and TSR. The active site involves arginine 235. The active site involves glutamate 264. The Proton donor role is filled by histidine 296. 296–299 serves as a coordination point for NAD(+); it reads HQAF.

It belongs to the D-isomer specific 2-hydroxyacid dehydrogenase family.

It is found in the cytoplasm. It localises to the nucleus. This chain is 2-hydroxyacid dehydrogenase homolog 2, found in Schizosaccharomyces pombe (strain 972 / ATCC 24843) (Fission yeast).